The primary structure comprises 557 residues: Tektin-5 (557 aa).

The stretch at 302–386 (DNIRHAQNMR…LLERAIVAKE (85 aa)) forms a coiled coil. Repeat copies occupy residues 507–512 (CSGSAL), 513–518 (CKGPAS), 519–524 (CGGGAS), 525–530 (CGGGAS), 531–536 (CGGHAP), and 537–541 (CGSAL). Positions 507–541 (CSGSALCKGPASCGGGASCGGGASCGGHAPCGSAL) are 6 X 6 AA approximate tandem repeats of C-[GSK]-G-[GSPH]-A-[SLP].

It belongs to the tektin family. In terms of assembly, microtubule inner protein component of sperm flagellar doublet microtubules. Interacts with TEKT3. In terms of processing, ubiquitinated, leading to its degradation. Deubiquitinated by USP16, promoting its stability. As to expression, strongly expressed in germ cells of the testis (at protein level). Expressed in spermatozoa. Also detected in brain.

The protein resides in the cytoplasm. Its subcellular location is the cytoskeleton. It is found in the flagellum axoneme. In terms of biological role, sperm-specific microtubule inner protein (MIP) part of the dynein-decorated doublet microtubules (DMTs) in flagellar axoneme. Forms an extensive interaction network in different conformations that reinforces the helix bundle composed by other tektin proteins (TEKT1 to TEKT4) and MIPs to anchor the tektin bundle onto the tubulin wall of A-tubule of the sperm flagellum. This chain is Tektin-5, found in Mus musculus (Mouse).